A 243-amino-acid polypeptide reads, in one-letter code: Probable transcriptional regulatory protein Tbd_2215 (243 aa).

This sequence belongs to the TACO1 family.

Its subcellular location is the cytoplasm. The sequence is that of Probable transcriptional regulatory protein Tbd_2215 from Thiobacillus denitrificans (strain ATCC 25259 / T1).